An 85-amino-acid chain; its full sequence is Large ribosomal subunit protein bL27 (85 aa).

Positions Met1–Arg20 are disordered.

This sequence belongs to the bacterial ribosomal protein bL27 family.

This chain is Large ribosomal subunit protein bL27, found in Enterobacter sp. (strain 638).